The sequence spans 436 residues: 3-ketoacyl-CoA thiolase (436 aa).

The Acyl-thioester intermediate role is filled by C99. Active-site proton acceptor residues include H392 and C422.

This sequence belongs to the thiolase-like superfamily. Thiolase family. As to quaternary structure, heterotetramer of two alpha chains (FadJ) and two beta chains (FadI).

It is found in the cytoplasm. It catalyses the reaction an acyl-CoA + acetyl-CoA = a 3-oxoacyl-CoA + CoA. The protein operates within lipid metabolism; fatty acid beta-oxidation. Functionally, catalyzes the final step of fatty acid oxidation in which acetyl-CoA is released and the CoA ester of a fatty acid two carbons shorter is formed. This is 3-ketoacyl-CoA thiolase from Shigella dysenteriae serotype 1 (strain Sd197).